The primary structure comprises 179 residues: Large ribosomal subunit protein uL10 (179 aa).

This sequence belongs to the universal ribosomal protein uL10 family. Part of the ribosomal stalk of the 50S ribosomal subunit. The N-terminus interacts with L11 and the large rRNA to form the base of the stalk. The C-terminus forms an elongated spine to which L12 dimers bind in a sequential fashion forming a multimeric L10(L12)X complex.

Forms part of the ribosomal stalk, playing a central role in the interaction of the ribosome with GTP-bound translation factors. The chain is Large ribosomal subunit protein uL10 from Thermotoga petrophila (strain ATCC BAA-488 / DSM 13995 / JCM 10881 / RKU-1).